Here is a 645-residue protein sequence, read N- to C-terminus: Acetyl-coenzyme A synthetase (645 aa).

Residues 190–193 (RGGR), Thr-309, and Asn-333 each bind CoA. Residues 385-387 (GEP), 409-414 (DTWWQT), Asp-498, and Arg-513 each bind ATP. Ser-521 provides a ligand contact to CoA. ATP is bound at residue Arg-524. The Mg(2+) site is built by Val-535, His-537, and Val-540. Arg-582 contacts CoA. N6-acetyllysine is present on Lys-607.

This sequence belongs to the ATP-dependent AMP-binding enzyme family. It depends on Mg(2+) as a cofactor. In terms of processing, acetylated. Deacetylation by the SIR2-homolog deacetylase activates the enzyme.

It catalyses the reaction acetate + ATP + CoA = acetyl-CoA + AMP + diphosphate. Its function is as follows. Catalyzes the conversion of acetate into acetyl-CoA (AcCoA), an essential intermediate at the junction of anabolic and catabolic pathways. AcsA undergoes a two-step reaction. In the first half reaction, AcsA combines acetate with ATP to form acetyl-adenylate (AcAMP) intermediate. In the second half reaction, it can then transfer the acetyl group from AcAMP to the sulfhydryl group of CoA, forming the product AcCoA. This chain is Acetyl-coenzyme A synthetase, found in Beijerinckia indica subsp. indica (strain ATCC 9039 / DSM 1715 / NCIMB 8712).